Reading from the N-terminus, the 146-residue chain is Putative pre-16S rRNA nuclease (146 aa).

It belongs to the YqgF nuclease family.

The protein resides in the cytoplasm. In terms of biological role, could be a nuclease involved in processing of the 5'-end of pre-16S rRNA. In Dechloromonas aromatica (strain RCB), this protein is Putative pre-16S rRNA nuclease.